The primary structure comprises 938 residues: Inner tegument protein (938 aa).

Residues 457–938 (EIVDLLFSST…LVEPLLLKLG (482 aa)) are interaction with large tegument protein.

The protein belongs to the herpesviridae inner tegument protein family. Interacts (via C-terminus) with the large tegument protein/LTP (via N-terminus).

The protein localises to the virion tegument. The protein resides in the host cytoplasm. Its subcellular location is the host nucleus. It localises to the host Golgi apparatus. It is found in the host trans-Golgi network. In terms of biological role, plays an essential role in cytoplasmic secondary envelopment during viral egress. Interacts with the capsid via the large tegument protein/LTP and participates in its transport to the host trans-Golgi network (TGN) where secondary envelopment occurs. Modulates tegumentation and capsid accumulation at the viral assembly complex. The protein is Inner tegument protein (U30) of Human herpesvirus 7 (strain JI) (HHV-7).